The sequence spans 341 residues: N-acetyl-gamma-glutamyl-phosphate reductase (341 aa).

Cys147 is a catalytic residue.

Belongs to the NAGSA dehydrogenase family. Type 1 subfamily.

The protein resides in the cytoplasm. The catalysed reaction is N-acetyl-L-glutamate 5-semialdehyde + phosphate + NADP(+) = N-acetyl-L-glutamyl 5-phosphate + NADPH + H(+). It participates in amino-acid biosynthesis; L-arginine biosynthesis; N(2)-acetyl-L-ornithine from L-glutamate: step 3/4. In terms of biological role, catalyzes the NADPH-dependent reduction of N-acetyl-5-glutamyl phosphate to yield N-acetyl-L-glutamate 5-semialdehyde. The polypeptide is N-acetyl-gamma-glutamyl-phosphate reductase (Dehalococcoides mccartyi (strain ATCC BAA-2100 / JCM 16839 / KCTC 5957 / BAV1)).